Reading from the N-terminus, the 382-residue chain is Chorismate synthase (382 aa).

Residues arginine 39 and arginine 45 each coordinate NADP(+). Residues 127–129 (RAS), 245–246 (QA), glycine 290, 305–309 (KPIPT), and arginine 331 contribute to the FMN site.

Belongs to the chorismate synthase family. Homotetramer. Requires FMNH2 as cofactor.

The catalysed reaction is 5-O-(1-carboxyvinyl)-3-phosphoshikimate = chorismate + phosphate. Its pathway is metabolic intermediate biosynthesis; chorismate biosynthesis; chorismate from D-erythrose 4-phosphate and phosphoenolpyruvate: step 7/7. Its function is as follows. Catalyzes the anti-1,4-elimination of the C-3 phosphate and the C-6 proR hydrogen from 5-enolpyruvylshikimate-3-phosphate (EPSP) to yield chorismate, which is the branch point compound that serves as the starting substrate for the three terminal pathways of aromatic amino acid biosynthesis. This reaction introduces a second double bond into the aromatic ring system. This Desulfitobacterium hafniense (strain DSM 10664 / DCB-2) protein is Chorismate synthase.